The primary structure comprises 105 residues: Phosphoribosyl-ATP pyrophosphatase (105 aa).

This sequence belongs to the PRA-PH family.

Its subcellular location is the cytoplasm. It carries out the reaction 1-(5-phospho-beta-D-ribosyl)-ATP + H2O = 1-(5-phospho-beta-D-ribosyl)-5'-AMP + diphosphate + H(+). The protein operates within amino-acid biosynthesis; L-histidine biosynthesis; L-histidine from 5-phospho-alpha-D-ribose 1-diphosphate: step 2/9. The sequence is that of Phosphoribosyl-ATP pyrophosphatase from Methylococcus capsulatus (strain ATCC 33009 / NCIMB 11132 / Bath).